A 176-amino-acid polypeptide reads, in one-letter code: Peptidoglycan-associated lipoprotein (176 aa).

The signal sequence occupies residues 1-32 (MSRIDTPAASRMQTIARNPVMIALVMTLALAG). C33 is lipidated: N-palmitoyl cysteine. The S-diacylglycerol cysteine moiety is linked to residue C33. Residues 58–175 (QQDFTVNVGD…RAVTVLGGAG (118 aa)) enclose the OmpA-like domain.

Belongs to the Pal lipoprotein family. As to quaternary structure, the Tol-Pal system is composed of five core proteins: the inner membrane proteins TolA, TolQ and TolR, the periplasmic protein TolB and the outer membrane protein Pal. They form a network linking the inner and outer membranes and the peptidoglycan layer.

The protein resides in the cell outer membrane. Part of the Tol-Pal system, which plays a role in outer membrane invagination during cell division and is important for maintaining outer membrane integrity. The polypeptide is Peptidoglycan-associated lipoprotein (Rhizobium meliloti (strain 1021) (Ensifer meliloti)).